A 448-amino-acid polypeptide reads, in one-letter code: Putative F-box/LRR-repeat protein At3g44810 (448 aa).

Positions 6–54 constitute an F-box domain; sequence TASLNCLPDELLVHVLSSLETKQAASTSVLSKRWRTLFAVRRNLDFDDS. LRR repeat units follow at residues 117–141, 143–165, 190–213, 228–251, 290–313, and 421–443; these read VSELHLCLTSVTRRLHRFPSNVFRS, TLVKLTLGTNLFIVYFPSDTCLP, CPALEDLTIDQKSFPGLPNVVSSK, FDWFRTVALDTPNLVTLLYSTYAR, VRNVQMLHLTSSATEVISQCCKGG, and IVDSKKVQLTEDLMKLPSASSRL.

The sequence is that of Putative F-box/LRR-repeat protein At3g44810 from Arabidopsis thaliana (Mouse-ear cress).